Here is a 181-residue protein sequence, read N- to C-terminus: tRNA-splicing endonuclease (181 aa).

Catalysis depends on residues Tyr-118, His-126, and Lys-157.

It belongs to the tRNA-intron endonuclease family. Archaeal short subfamily. As to quaternary structure, homotetramer; although the tetramer contains four active sites, only two participate in the cleavage. Therefore, it should be considered as a dimer of dimers.

The enzyme catalyses pretRNA = a 3'-half-tRNA molecule with a 5'-OH end + a 5'-half-tRNA molecule with a 2',3'-cyclic phosphate end + an intron with a 2',3'-cyclic phosphate and a 5'-hydroxyl terminus.. Functionally, endonuclease that removes tRNA introns. Cleaves pre-tRNA at the 5'- and 3'-splice sites to release the intron. The products are an intron and two tRNA half-molecules bearing 2',3' cyclic phosphate and 5'-OH termini. Recognizes a pseudosymmetric substrate in which 2 bulged loops of 3 bases are separated by a stem of 4 bp. This Sulfolobus acidocaldarius (strain ATCC 33909 / DSM 639 / JCM 8929 / NBRC 15157 / NCIMB 11770) protein is tRNA-splicing endonuclease.